We begin with the raw amino-acid sequence, 123 residues long: Small ribosomal subunit protein uS12 (123 aa).

Positions 1-23 (MPTISQLVKKGREKVEKKTKSPA) are disordered. Position 89 is a 3-methylthioaspartic acid (Asp-89).

This sequence belongs to the universal ribosomal protein uS12 family. In terms of assembly, part of the 30S ribosomal subunit. Contacts proteins S8 and S17. May interact with IF1 in the 30S initiation complex.

Its function is as follows. With S4 and S5 plays an important role in translational accuracy. Interacts with and stabilizes bases of the 16S rRNA that are involved in tRNA selection in the A site and with the mRNA backbone. Located at the interface of the 30S and 50S subunits, it traverses the body of the 30S subunit contacting proteins on the other side and probably holding the rRNA structure together. The combined cluster of proteins S8, S12 and S17 appears to hold together the shoulder and platform of the 30S subunit. This Thermodesulfovibrio yellowstonii (strain ATCC 51303 / DSM 11347 / YP87) protein is Small ribosomal subunit protein uS12.